A 719-amino-acid polypeptide reads, in one-letter code: Protein ENHANCED DISEASE RESISTANCE 2-like (719 aa).

The PH domain maps to 3–110; it reads KVVYEGWMVR…WKEKIECVID (108 aa). The segment at 134–173 is disordered; that stretch reads AGRTASSSDHESPFSALEDENDSQRDLLRRTTIGNGPPES. One can recognise an START domain in the interval 180 to 392; that stretch reads EFDAELSNQS…VSGLREWFSQ (213 aa). The segment at 414 to 478 is disordered; it reads ALGKGGKHHH…ETDAKKTEEP (65 aa). Residues 426–439 show a composition bias toward polar residues; sequence SLSIDQTNGASRNS. Residues 442–461 show a composition bias toward acidic residues; the sequence is MDEDSDDDDEFQIPDSEPEP. Basic and acidic residues predominate over residues 462-477; sequence ETSKQDQETDAKKTEE. The helical transmembrane segment at 665-685 threads the bilayer; sequence GVLGLVIGVITSLVVEMAFLV.

It is found in the endoplasmic reticulum membrane. It localises to the cell membrane. The protein resides in the endosome membrane. Binds to phosphatidylinositol-4-phosphate (PtdIns(4)P). May regulate the salicylic acid- (SA-) mediated resistance to pathogens. The protein is Protein ENHANCED DISEASE RESISTANCE 2-like (EDR2L) of Arabidopsis thaliana (Mouse-ear cress).